The chain runs to 509 residues: SH2 domain-containing adapter protein B (509 aa).

2 disordered regions span residues 1–103 and 144–178; these read MAKW…GSSL and SGAGAAASSSSSSGSPHLYRSSSERRPATPAEVRY. Residues 1 to 410 form a mediates interaction with LAT, PTK2/FAK1, JAK1 and JAK3 region; the sequence is MAKWLNKYFS…PAVPLEKQIW (410 aa). Residues 44–61 are compositionally biased toward low complexity; it reads VPQASSAASASCGPATAS. Over residues 62-79 the composition is skewed to polar residues; it reads CFSASSGSLPDDSGSTSD. Ser-102 is modified (phosphoserine). The segment covering 144 to 158 has biased composition (low complexity); sequence SGAGAAASSSSSSGS. Residue Lys-187 forms a Glycyl lysine isopeptide (Lys-Gly) (interchain with G-Cter in SUMO2) linkage. The segment at 229–385 is disordered; it reads AEESGAGKKD…APGGGFKPIK (157 aa). 2 stretches are compositionally biased toward basic and acidic residues: residues 233–242 and 250–262; these read GAGKKDKVTI and FDAKNDLKSKAGK. 2 positions are modified to phosphoserine: Ser-307 and Ser-317. Residues 307 to 317 show a composition bias toward polar residues; it reads SVDSDSESTVS. Over residues 319–334 the composition is skewed to basic and acidic residues; sequence RLRESKLPQDDDRPAD. At Ser-388 the chain carries Phosphoserine. Residues 410 to 504 form the SH2 domain; sequence WYHGAISRGD…AEHLSLLYPV (95 aa).

Interacts with PTPN11. Interacts with phosphorylated 'Tyr-720' of the ligand-activated receptor PDGFRA via its SH2 domain. Interacts with the ligand-activated receptors PDGFRB, FGFR1, KDR/VEGFR2, IL2RB and IL2RG. Interacts with EPS8 and V-SRC. Interacts with GRB2 and GRAP. Interacts with CD3Z. Interacts with tyrosine-phosphorylated LAT upon T-cell antigen receptor activation. Interacts with PLCG1. Interacts with ZAP70, LCP2/SLP-76, VAV1 and GRAP2. Interacts with JAK1 and JAK3. Interacts with PTK2/FAK1. Interacts with CRK/CrKII. Interacts with IRS2. Phosphorylated upon PDGFRA, PDGFRB, TCR, IL2 receptor, FGFR1 or VEGFR2 activation. As to expression, widely expressed.

The protein localises to the cytoplasm. It is found in the cell membrane. Its function is as follows. Adapter protein which regulates several signal transduction cascades by linking activated receptors to downstream signaling components. May play a role in angiogenesis by regulating FGFR1, VEGFR2 and PDGFR signaling. May also play a role in T-cell antigen receptor/TCR signaling, interleukin-2 signaling, apoptosis and neuronal cells differentiation by mediating basic-FGF and NGF-induced signaling cascades. May also regulate IRS1 and IRS2 signaling in insulin-producing cells. This is SH2 domain-containing adapter protein B (SHB) from Homo sapiens (Human).